The sequence spans 226 residues: ATP-dependent Clp protease proteolytic subunit 2 (226 aa).

S118 serves as the catalytic Nucleophile. H143 is an active-site residue.

The protein belongs to the peptidase S14 family. Fourteen ClpP subunits assemble into 2 heptameric rings which stack back to back to give a disk-like structure with a central cavity, resembling the structure of eukaryotic proteasomes.

It is found in the cytoplasm. It carries out the reaction Hydrolysis of proteins to small peptides in the presence of ATP and magnesium. alpha-casein is the usual test substrate. In the absence of ATP, only oligopeptides shorter than five residues are hydrolyzed (such as succinyl-Leu-Tyr-|-NHMec, and Leu-Tyr-Leu-|-Tyr-Trp, in which cleavage of the -Tyr-|-Leu- and -Tyr-|-Trp bonds also occurs).. Its function is as follows. Cleaves peptides in various proteins in a process that requires ATP hydrolysis. Has a chymotrypsin-like activity. Plays a major role in the degradation of misfolded proteins. The sequence is that of ATP-dependent Clp protease proteolytic subunit 2 from Synechocystis sp. (strain ATCC 27184 / PCC 6803 / Kazusa).